Here is a 404-residue protein sequence, read N- to C-terminus: MSIPTYMDYSATTPVDERVAQKMIQFLTKDGNFGNSASNSHYYGWQADEAVKKARQQVANLIDADPKEIVWTSGATESNNLAIKGVAHFYHKKGKHIITLKTEHKSVLDTCRQLEREGFEVTYLDPMSNGLLDLNILRDAMREDTILVSIMHVNNEIGVIQDIESIGNLCHQNNIFFHVDAAQSAGKVAISLSELSVDLMSFSAHKIYGPKGMGALYVRRKPRVRIEAQMHGGGHERGMRSGTLATHQIVGMGEAFAIAQAEMREENTKIRQLRDRLLVGFIDMEEVVVNGDMESRIPGNLNISFNYVEGESLMMAINDIAVSSGSACTSLSLEPSYVLRALGLNDELAHSSIRFTIGRYTTEAQIDKAIDLVRAKVDKLRDLSPLWDMFKDGVDISKVEWSAH.

Pyridoxal 5'-phosphate-binding positions include 75–76, N155, Q183, and 203–205; these read AT and SAH. K206 carries the N6-(pyridoxal phosphate)lysine modification. T243 is a binding site for pyridoxal 5'-phosphate. C328 serves as the catalytic Cysteine persulfide intermediate. C328 is a [2Fe-2S] cluster binding site.

This sequence belongs to the class-V pyridoxal-phosphate-dependent aminotransferase family. NifS/IscS subfamily. As to quaternary structure, homodimer. Forms a heterotetramer with IscU, interacts with other sulfur acceptors. Pyridoxal 5'-phosphate serves as cofactor.

It localises to the cytoplasm. It carries out the reaction (sulfur carrier)-H + L-cysteine = (sulfur carrier)-SH + L-alanine. It functions in the pathway cofactor biosynthesis; iron-sulfur cluster biosynthesis. Its function is as follows. Master enzyme that delivers sulfur to a number of partners involved in Fe-S cluster assembly, tRNA modification or cofactor biosynthesis. Catalyzes the removal of elemental sulfur atoms from cysteine to produce alanine. Functions as a sulfur delivery protein for Fe-S cluster synthesis onto IscU, an Fe-S scaffold assembly protein, as well as other S acceptor proteins. The sequence is that of Cysteine desulfurase IscS from Vesicomyosocius okutanii subsp. Calyptogena okutanii (strain HA).